A 156-amino-acid chain; its full sequence is Ribonuclease H (156 aa).

Residues 1 to 142 (MGKQVEIFTD…CDELARAAAN (142 aa)) enclose the RNase H type-1 domain. 4 residues coordinate Mg(2+): Asp-10, Glu-48, Asp-70, and Asp-134.

The protein belongs to the RNase H family. In terms of assembly, monomer. Mg(2+) serves as cofactor.

It localises to the cytoplasm. It carries out the reaction Endonucleolytic cleavage to 5'-phosphomonoester.. Its function is as follows. Endonuclease that specifically degrades the RNA of RNA-DNA hybrids. This Photorhabdus laumondii subsp. laumondii (strain DSM 15139 / CIP 105565 / TT01) (Photorhabdus luminescens subsp. laumondii) protein is Ribonuclease H.